Consider the following 289-residue polypeptide: DegV domain-containing protein YteA (289 aa).

Positions 3–284 constitute a DegV domain; that stretch reads FQIMTDSTAD…DGTIAIFSIS (282 aa). Hexadecanoate is bound by residues T62 and S94.

Functionally, may bind long-chain fatty acids, such as palmitate, and may play a role in lipid transport or fatty acid metabolism. The sequence is that of DegV domain-containing protein YteA (yteA) from Lactococcus lactis subsp. lactis (strain IL1403) (Streptococcus lactis).